The chain runs to 426 residues: Dihydroorotase (426 aa).

Positions 62 and 64 each coordinate Zn(2+). Residues 64–66 (HLR) and asparagine 96 contribute to the substrate site. Zn(2+)-binding residues include aspartate 154, histidine 181, and histidine 234. Residue asparagine 280 coordinates substrate. Aspartate 307 contacts Zn(2+). The active site involves aspartate 307. Substrate-binding positions include histidine 311 and 325-326 (FG).

Belongs to the metallo-dependent hydrolases superfamily. DHOase family. Class I DHOase subfamily. It depends on Zn(2+) as a cofactor.

The enzyme catalyses (S)-dihydroorotate + H2O = N-carbamoyl-L-aspartate + H(+). It functions in the pathway pyrimidine metabolism; UMP biosynthesis via de novo pathway; (S)-dihydroorotate from bicarbonate: step 3/3. Its function is as follows. Catalyzes the reversible cyclization of carbamoyl aspartate to dihydroorotate. In Desulforapulum autotrophicum (strain ATCC 43914 / DSM 3382 / VKM B-1955 / HRM2) (Desulfobacterium autotrophicum), this protein is Dihydroorotase.